A 540-amino-acid chain; its full sequence is Signal peptide peptidase-like 3 (540 aa).

Positions 1-28 (MSSFDPPNHRYSALVLILLLLGFSVAAA) are cleaved as a signal peptide. The Lumenal portion of the chain corresponds to 29-194 (DDVSWTEDSS…LYAPKRPAVD (166 aa)). In terms of domain architecture, PA spans 98 to 172 (SHLSSRLDGH…ISKSSGDALN (75 aa)). Asparagine 155 and asparagine 172 each carry an N-linked (GlcNAc...) asparagine glycan. A helical membrane pass occupies residues 195–215 (LTAGLLLLMAVGTVVVASLWS). Over 216 to 250 (ELTDPDQANESYSILAKDVSSAGTRKDDPEKEILD) the chain is Cytoplasmic. The chain crosses the membrane as a helical span at residues 251-273 (ISVTGAVFFIVTASIFLLLLFYF). Topologically, residues 274–276 (MSS) are lumenal. Residues 277–299 (WFVWVLTIFFCIGGMQGMHNIIM) form a helical membrane-spanning segment. Over 300-321 (AVILRKCRHLARKSVKLPLLGT) the chain is Cytoplasmic. The chain crosses the membrane as a helical span at residues 322 to 342 (MSVLSLLVNIVCLAFAVFWFI). Residues 343-347 (KRHTS) are Lumenal-facing. Residues 348–368 (YSWVGQDILGICLMITALQVV) traverse the membrane as a helical segment. Over 369 to 377 (RLPNIKVAT) the chain is Cytoplasmic. A helical transmembrane segment spans residues 378–398 (VLLCCAFVYDIFWVFISPLIF). Aspartate 387 is a catalytic residue. Residues 399 to 429 (HESVMIVVAQGDSSTGESIPMLLRIPRFFDP) are Lumenal-facing. The helical transmembrane segment at 430 to 450 (WGGYDMIGFGDILFPGLLISF) threads the bilayer. Residue aspartate 440 is part of the active site. The Cytoplasmic segment spans residues 451-466 (ASRYDKIKKRVISNGY). The chain crosses the membrane as a helical span at residues 467–487 (FLWLTIGYGIGLLLTYLGLYL). The Lumenal segment spans residues 488-492 (MDGHG). The helical transmembrane segment at 493 to 513 (QPALLYIVPCTLGLAVILGLV) threads the bilayer. The PAL motif lies at 494–496 (PAL). The Cytoplasmic segment spans residues 514-540 (RGELKELWNYGIEESESHTPEDPMPVA).

This sequence belongs to the peptidase A22B family. In terms of processing, glycosylated. Ubiquitous.

It localises to the endosome membrane. Its function is as follows. Intramembrane-cleaving aspartic protease (I-CLiP) that cleaves type II membrane signal peptides in the hydrophobic plane of the membrane. This chain is Signal peptide peptidase-like 3 (SPPL3), found in Arabidopsis thaliana (Mouse-ear cress).